Here is a 405-residue protein sequence, read N- to C-terminus: Arginine biosynthesis bifunctional protein ArgJ (405 aa).

6 residues coordinate substrate: T152, K178, T189, E276, N400, and T405. The active-site Nucleophile is T189.

This sequence belongs to the ArgJ family. Heterotetramer of two alpha and two beta chains.

It is found in the cytoplasm. It carries out the reaction N(2)-acetyl-L-ornithine + L-glutamate = N-acetyl-L-glutamate + L-ornithine. It catalyses the reaction L-glutamate + acetyl-CoA = N-acetyl-L-glutamate + CoA + H(+). It participates in amino-acid biosynthesis; L-arginine biosynthesis; L-ornithine and N-acetyl-L-glutamate from L-glutamate and N(2)-acetyl-L-ornithine (cyclic): step 1/1. The protein operates within amino-acid biosynthesis; L-arginine biosynthesis; N(2)-acetyl-L-ornithine from L-glutamate: step 1/4. In terms of biological role, catalyzes two activities which are involved in the cyclic version of arginine biosynthesis: the synthesis of N-acetylglutamate from glutamate and acetyl-CoA as the acetyl donor, and of ornithine by transacetylation between N(2)-acetylornithine and glutamate. This Pseudomonas putida (strain ATCC 47054 / DSM 6125 / CFBP 8728 / NCIMB 11950 / KT2440) protein is Arginine biosynthesis bifunctional protein ArgJ.